A 154-amino-acid chain; its full sequence is Pro-corazonin (154 aa).

The first 19 residues, 1 to 19 (MLRLLLLPLFLFTLSMCMG), serve as a signal peptide directing secretion. Glutamine 20 bears the Pyrrolidone carboxylic acid mark. Asparagine 30 is subject to Asparagine amide. Positions 70–154 (LERCLSQLQR…SAEPNVFGKH (85 aa)) are excised as a propeptide.

It belongs to the corazonin family. Expression is restricted to 24 neurons in the larval CNS (8 in the brain and 16 in the ventral nerve cord) and 12-16 neurons in the pars lateralis of the adult brain.

Its subcellular location is the secreted. Cardioactive peptide. Corazonin is probably involved in the physiological regulation of the heart beat. Clock (Clk) and cycle (cyc) proteins negatively regulate Crz transcription in a cell-specific manner. The protein is Pro-corazonin (Crz) of Drosophila erecta (Fruit fly).